Here is a 209-residue protein sequence, read N- to C-terminus: MSASKFIKCVTVGDGAVGKTCMLICYTSNKFPTDYIPTVFDNFSANVAVDGQIVNLGLWDTAGQEDYSRLRPLSYRGADIFVLAFSLISKASYENVLKKWMPELRRFAPNVPIVLVGTKLDLRDDKGYLADHTNVITSTQGEELRKQIGAAAYIECSSKTQQNVKAVFDTAIKVVLQPPRRKEVPRRRKNHRRSGCSIASIVCGGCTAA.

13 to 20 is a GTP binding site; that stretch reads GDGAVGKT. The Effector region signature appears at 35–43; that stretch reads YIPTVFDNF. Residues 60–64 and 118–121 contribute to the GTP site; these read DTAGQ and TKLD. Residues C196, C203, and C206 are each lipidated (S-palmitoyl cysteine).

This sequence belongs to the small GTPase superfamily. Rho family. In terms of processing, although this sequence has a C-terminal -CXXX, it is palmitoylated at Cys-206, rather than prenylated.

It localises to the membrane. Acts as a negative regulator of abscisic acid (ABA) responses. This chain is Rac-like GTP-binding protein ARAC7 (ARAC7), found in Arabidopsis thaliana (Mouse-ear cress).